We begin with the raw amino-acid sequence, 341 residues long: Undecaprenyl-phosphate 4-deoxy-4-formamido-L-arabinose transferase (341 aa).

Transmembrane regions (helical) follow at residues 235–255 (LSIV…ALIV) and 269–289 (LFVL…GMGL).

This sequence belongs to the glycosyltransferase 2 family.

It is found in the cell inner membrane. It catalyses the reaction UDP-4-deoxy-4-formamido-beta-L-arabinose + di-trans,octa-cis-undecaprenyl phosphate = 4-deoxy-4-formamido-alpha-L-arabinopyranosyl di-trans,octa-cis-undecaprenyl phosphate + UDP. Its pathway is glycolipid biosynthesis; 4-amino-4-deoxy-alpha-L-arabinose undecaprenyl phosphate biosynthesis; 4-amino-4-deoxy-alpha-L-arabinose undecaprenyl phosphate from UDP-4-deoxy-4-formamido-beta-L-arabinose and undecaprenyl phosphate: step 1/2. The protein operates within bacterial outer membrane biogenesis; lipopolysaccharide biosynthesis. In terms of biological role, catalyzes the transfer of 4-deoxy-4-formamido-L-arabinose from UDP to undecaprenyl phosphate. The modified arabinose is attached to lipid A and is required for resistance to polymyxin and cationic antimicrobial peptides. In Pseudomonas fluorescens (strain SBW25), this protein is Undecaprenyl-phosphate 4-deoxy-4-formamido-L-arabinose transferase.